The following is a 200-amino-acid chain: NAD(P)H dehydrogenase (quinone) (200 aa).

The 188-residue stretch at 4 to 191 folds into the Flavodoxin-like domain; it reads VLVLYYSSYG…DIARYQGKHV (188 aa). Residues 10 to 15 and 79 to 81 each bind FMN; these read SSYGHV and TRF. Position 12 (Tyr12) interacts with NAD(+). Trp99 contributes to the substrate binding site. Residues 114–120 and His135 each bind FMN; that span reads STGTQHG.

It belongs to the WrbA family. Requires FMN as cofactor.

The catalysed reaction is a quinone + NADH + H(+) = a quinol + NAD(+). The enzyme catalyses a quinone + NADPH + H(+) = a quinol + NADP(+). This is NAD(P)H dehydrogenase (quinone) from Burkholderia cenocepacia (strain ATCC BAA-245 / DSM 16553 / LMG 16656 / NCTC 13227 / J2315 / CF5610) (Burkholderia cepacia (strain J2315)).